The following is a 486-amino-acid chain: UDP-N-acetylmuramate--L-alanine ligase (486 aa).

123-129 (GTHGKTT) is a binding site for ATP.

It belongs to the MurCDEF family.

It is found in the cytoplasm. It catalyses the reaction UDP-N-acetyl-alpha-D-muramate + L-alanine + ATP = UDP-N-acetyl-alpha-D-muramoyl-L-alanine + ADP + phosphate + H(+). The protein operates within cell wall biogenesis; peptidoglycan biosynthesis. Cell wall formation. This Pseudomonas savastanoi pv. phaseolicola (strain 1448A / Race 6) (Pseudomonas syringae pv. phaseolicola (strain 1448A / Race 6)) protein is UDP-N-acetylmuramate--L-alanine ligase.